A 635-amino-acid chain; its full sequence is Protein MICRORCHIDIA 1 (635 aa).

Residues Arg-491 to Ser-511 are disordered. Residues Met-588–Val-635 adopt a coiled-coil conformation.

This sequence belongs to the MORC ATPase protein family. In terms of assembly, homodimer and heterodimer with MORC6. Component of an RNA-directed DNA methylation (RdDM) complex that contains at least MORC6, MORC1/CRT1, MORC2, SWI3D and SUVH9. Binds directly to SUVH2 and SUVH9. Interacts with the resistance proteins RCY1, RPM1, SNC1, RPP8, SSI4 and RPS2. The interactions with various resistance proteins are disrupted when these resistance proteins are activated. Interacts with the PAMP recognition receptor FLS2. It depends on Mg(2+) as a cofactor. Mn(2+) is required as a cofactor. As to expression, expressed constitutively.

The protein resides in the nucleus. It is found in the endosome. Functionally, mediator of defense signaling triggered by distinct classes of R proteins. Required during hypersensitive response (HR) that confers disease resistance to turnip crinkle virus (TCV). Exhibits ATPase activity. Contributes to resistance against Pseudomonas syringae and Hyaloperonospora arabidopsidis, at early stages prior to cytosolic calcium ions Ca(2+) accumulation. Required for pathogen-associated molecular pattern (PAMP)-triggered immunity (PTI), basal resistance, non-host resistance and systemic acquired resistance (SAR). Binds DNA/RNA in a non-specific manner and exhibits endonuclease activity. Probably involved in DNA repair. Required for both RPP8- and SSI4-mediated resistance responses, thus being involved in both TIR- and CC-NB-LRR pathways. Involved in RNA-directed DNA methylation (RdDM) as a component of the RdDM machinery and required for gene silencing. May also be involved in the regulation of chromatin architecture to maintain gene silencing. This Arabidopsis thaliana (Mouse-ear cress) protein is Protein MICRORCHIDIA 1.